The chain runs to 182 residues: Isopentenyl-diphosphate Delta-isomerase (182 aa).

His25 and His32 together coordinate Mn(2+). The region spanning 30–164 (LLHLAFSSWL…PWAFSPWMVM (135 aa)) is the Nudix hydrolase domain. The active site involves Cys67. Mg(2+) is bound at residue Cys67. His69 contacts Mn(2+). Glu87 contacts Mg(2+). Mn(2+) contacts are provided by Glu114 and Glu116. Glu116 is an active-site residue.

Belongs to the IPP isomerase type 1 family. In terms of assembly, homodimer. The cofactor is Mg(2+). It depends on Mn(2+) as a cofactor.

It is found in the cytoplasm. It carries out the reaction isopentenyl diphosphate = dimethylallyl diphosphate. Its pathway is isoprenoid biosynthesis; dimethylallyl diphosphate biosynthesis; dimethylallyl diphosphate from isopentenyl diphosphate: step 1/1. Functionally, catalyzes the 1,3-allylic rearrangement of the homoallylic substrate isopentenyl (IPP) to its highly electrophilic allylic isomer, dimethylallyl diphosphate (DMAPP). This chain is Isopentenyl-diphosphate Delta-isomerase, found in Escherichia coli O6:H1 (strain CFT073 / ATCC 700928 / UPEC).